The primary structure comprises 123 residues: Fluoride-specific ion channel FluC (123 aa).

Transmembrane regions (helical) follow at residues L7–L27, M39–F59, F68–F88, and L101–A121. Residues G75 and S78 each contribute to the Na(+) site.

This sequence belongs to the fluoride channel Fluc/FEX (TC 1.A.43) family.

It is found in the cell membrane. The enzyme catalyses fluoride(in) = fluoride(out). Na(+) is not transported, but it plays an essential structural role and its presence is essential for fluoride channel function. Functionally, fluoride-specific ion channel. Important for reducing fluoride concentration in the cell, thus reducing its toxicity. The chain is Fluoride-specific ion channel FluC from Thermococcus gammatolerans (strain DSM 15229 / JCM 11827 / EJ3).